The primary structure comprises 517 residues: Protein disulfide-isomerase A5 (517 aa).

Residues 1-21 (MARAWGLLLAIGVILPTWLSS) form the signal peptide. 4 cysteine pairs are disulfide-bonded: cysteine 83-cysteine 92, cysteine 180-cysteine 183, cysteine 303-cysteine 306, and cysteine 424-cysteine 427. Thioredoxin domains are found at residues 132–259 (FLKD…NPQP), 268–382 (PWAD…NPEA), and 376–504 (WMQN…TLRE). The short motif at 514-517 (REDL) is the Prevents secretion from ER element.

This sequence belongs to the protein disulfide isomerase family.

Its subcellular location is the endoplasmic reticulum lumen. The catalysed reaction is Catalyzes the rearrangement of -S-S- bonds in proteins.. The polypeptide is Protein disulfide-isomerase A5 (Pdia5) (Rattus norvegicus (Rat)).